A 309-amino-acid chain; its full sequence is Coproporphyrin III ferrochelatase (309 aa).

Fe-coproporphyrin III is bound by residues tyrosine 12, arginine 29, 45 to 46 (RY), serine 53, and tyrosine 124. Residues histidine 182 and glutamate 263 each contribute to the Fe(2+) site.

This sequence belongs to the ferrochelatase family.

It is found in the cytoplasm. It carries out the reaction Fe-coproporphyrin III + 2 H(+) = coproporphyrin III + Fe(2+). The protein operates within porphyrin-containing compound metabolism; protoheme biosynthesis. Functionally, involved in coproporphyrin-dependent heme b biosynthesis. Catalyzes the insertion of ferrous iron into coproporphyrin III to form Fe-coproporphyrin III. This Listeria monocytogenes serotype 4b (strain F2365) protein is Coproporphyrin III ferrochelatase.